A 431-amino-acid polypeptide reads, in one-letter code: WD repeat-containing protein 18 (431 aa).

WD repeat units follow at residues 78–118 (VCPG…AILS), 119–158 (RHFQ…QLDS), 170–211 (RHSL…MLLS), 213–252 (LFDV…LSRD), and 267–306 (GHRN…CIWT). A disordered region spans residues 342–363 (HLNPSEQGDGTGTGGMSLRLGA).

The protein belongs to the WD repeat IPI3/WDR18 family. Component of the PELP1 complex, composed of at least PELP1, TEX10 and WDR18. The complex interacts with pre-60S ribosome particles.

It localises to the nucleus. It is found in the nucleolus. The protein localises to the nucleoplasm. The protein resides in the dynein axonemal particle. Involved in left-right determination through controlling the correct clustering and migration of dorsal forerunner cells (DFCs) and Kupffer's vesicle formation. Component of the PELP1 complex involved in the nucleolar steps of 28S rRNA maturation and the subsequent nucleoplasmic transit of the pre-60S ribosomal subunit. In Danio rerio (Zebrafish), this protein is WD repeat-containing protein 18 (wdr18).